A 269-amino-acid polypeptide reads, in one-letter code: 5'-nucleotidase SurE (269 aa).

4 residues coordinate a divalent metal cation: Asp-8, Asp-9, Ser-40, and Asn-93.

The protein belongs to the SurE nucleotidase family. It depends on a divalent metal cation as a cofactor.

The protein resides in the cytoplasm. The catalysed reaction is a ribonucleoside 5'-phosphate + H2O = a ribonucleoside + phosphate. Its function is as follows. Nucleotidase that shows phosphatase activity on nucleoside 5'-monophosphates. In Caulobacter sp. (strain K31), this protein is 5'-nucleotidase SurE.